Reading from the N-terminus, the 1442-residue chain is Cleavage and polyadenylation specificity factor subunit 1 (1442 aa).

The protein belongs to the CPSF1 family. Component of the CPSF complex, at least composed of CPSF160, CPSF100, CPSF73-I, CPSF73-II, CPSF30, FY and FIPS5. Forms a complex with cleavage and polyadenylation specificity factor (CPSF) subunits FY, CPSF30, CPSF73-I, CPSF 73-II and CPSF100.

It is found in the nucleus. In terms of biological role, CPSF plays a key role in pre-mRNA 3'-end formation, recognizing the AAUAAA signal sequence and interacting with poly(A)polymerase and other factors to bring about cleavage and poly(A) addition. This subunit is involved in the RNA recognition step of the polyadenylation reaction. The polypeptide is Cleavage and polyadenylation specificity factor subunit 1 (CPSF160) (Arabidopsis thaliana (Mouse-ear cress)).